We begin with the raw amino-acid sequence, 250 residues long: MWIGVISLFPEMFRAITEYGVTGRAVKHGLLNVECWDPRDFTYDRHHTVDDRPYGGGPGMLMMVQPLREAIHQAKAAAGDGAKVIYLSPQGRKLDQQGVCELATNEKLILVCGRYEGIDERVIQTEIDEEWSVGDYVLSGGELPAMIMIDAVARFVPGVLGHAASAKEDSFAEGLLDHPHYTRPEVLDGMAVPAVLLSGNHAHINRWRMKQSLGRTWLRRPELLESLALTDEQRVLLAEFQQEHLQRTAE.

S-adenosyl-L-methionine-binding positions include glycine 113 and 133 to 138; that span reads VGDYVL.

Belongs to the RNA methyltransferase TrmD family. In terms of assembly, homodimer.

The protein localises to the cytoplasm. It catalyses the reaction guanosine(37) in tRNA + S-adenosyl-L-methionine = N(1)-methylguanosine(37) in tRNA + S-adenosyl-L-homocysteine + H(+). In terms of biological role, specifically methylates guanosine-37 in various tRNAs. The chain is tRNA (guanine-N(1)-)-methyltransferase from Proteus mirabilis (strain HI4320).